We begin with the raw amino-acid sequence, 91 residues long: UPF0298 protein OB1449 (91 aa).

It belongs to the UPF0298 family.

The protein resides in the cytoplasm. In Oceanobacillus iheyensis (strain DSM 14371 / CIP 107618 / JCM 11309 / KCTC 3954 / HTE831), this protein is UPF0298 protein OB1449.